The following is a 174-amino-acid chain: Shikimate kinase 2 (174 aa).

Residue 12-17 (GAGKTT) coordinates ATP. Mg(2+) contacts are provided by threonine 16 and aspartate 32. Residues aspartate 34, arginine 58, and glycine 79 each contribute to the substrate site. The segment at 112 to 126 (AEDPEDAQRPSLTGK) is LID domain. Arginine 120 contacts ATP. Arginine 139 provides a ligand contact to substrate. Glutamine 155 contributes to the ATP binding site.

It belongs to the shikimate kinase family. AroL subfamily. As to quaternary structure, monomer. It depends on Mg(2+) as a cofactor.

It localises to the cytoplasm. The enzyme catalyses shikimate + ATP = 3-phosphoshikimate + ADP + H(+). Its pathway is metabolic intermediate biosynthesis; chorismate biosynthesis; chorismate from D-erythrose 4-phosphate and phosphoenolpyruvate: step 5/7. Functionally, catalyzes the specific phosphorylation of the 3-hydroxyl group of shikimic acid using ATP as a cosubstrate. This is Shikimate kinase 2 from Yersinia enterocolitica serotype O:8 / biotype 1B (strain NCTC 13174 / 8081).